A 614-amino-acid chain; its full sequence is UvrABC system protein C (614 aa).

The GIY-YIG domain occupies 14 to 91; it reads TSPGCYIHKD…IKENKPKYNI (78 aa). The UVR domain maps to 196–231; the sequence is DKIIDDLKSKMAVAAQSMEFERAAEYRDLIQAIGTL. The segment at 595–614 is disordered; that stretch reads LPQVAEERVDYQTEGNHNEP. A compositionally biased stretch (basic and acidic residues) spans 599–614; it reads AEERVDYQTEGNHNEP.

This sequence belongs to the UvrC family. As to quaternary structure, interacts with UvrB in an incision complex.

The protein localises to the cytoplasm. The UvrABC repair system catalyzes the recognition and processing of DNA lesions. UvrC both incises the 5' and 3' sides of the lesion. The N-terminal half is responsible for the 3' incision and the C-terminal half is responsible for the 5' incision. The sequence is that of UvrABC system protein C from Streptococcus pneumoniae serotype 4 (strain ATCC BAA-334 / TIGR4).